The primary structure comprises 296 residues: GTPase Era (296 aa).

The Era-type G domain maps to 7–174; it reads KAGYISIVGR…TEVIRHYLPE (168 aa). The tract at residues 15 to 22 is G1; that stretch reads GRPNVGKS. A GTP-binding site is contributed by 15 to 22; it reads GRPNVGKS. The tract at residues 41–45 is G2; sequence QTTRH. The G3 stretch occupies residues 62–65; the sequence is DTPG. Residues 62-66 and 123-126 contribute to the GTP site; these read DTPGF and NKID. The tract at residues 123-126 is G4; that stretch reads NKID. Residues 153–155 are G5; sequence VSA. Residues 205 to 281 enclose the KH type-2 domain; the sequence is IGEEVPYSVS…YLEIWVKVKS (77 aa).

This sequence belongs to the TRAFAC class TrmE-Era-EngA-EngB-Septin-like GTPase superfamily. Era GTPase family. As to quaternary structure, monomer.

The protein localises to the cytoplasm. The protein resides in the cell inner membrane. Its function is as follows. An essential GTPase that binds both GDP and GTP, with rapid nucleotide exchange. Plays a role in 16S rRNA processing and 30S ribosomal subunit biogenesis and possibly also in cell cycle regulation and energy metabolism. This is GTPase Era from Nitrosomonas eutropha (strain DSM 101675 / C91 / Nm57).